Consider the following 261-residue polypeptide: Eukaryotic translation initiation factor 3 subunit J-A (261 aa).

Low complexity predominate over residues 1–11 (MAAAAAAAAAA). Residues 1–113 (MAAAAAAAAA…EPEESKVLTP (113 aa)) are disordered. A sufficient for interaction with EIF3B region spans residues 4 to 72 (AAAAAAAAGD…KEEAEVKPEV (69 aa)). Phosphoserine occurs at positions 14, 16, and 23. Residues 43-64 (EGEDEDEDVKDNWDDDDDENKE) show a composition bias toward acidic residues. The segment covering 65-109 (EAEVKPEVKISEKKKIAEKIKEKERQQKKRQEEIKKRLEEPEESK) has biased composition (basic and acidic residues). The stretch at 73–138 (KISEKKKIAE…ESDLELAKET (66 aa)) forms a coiled coil. A Glycyl lysine isopeptide (Lys-Gly) (interchain with G-Cter in SUMO2) cross-link involves residue lysine 109. Threonine 112 bears the Phosphothreonine mark. Serine 130 is subject to Phosphoserine. Residues 246 to 261 (YGGYEGGYVQDYEDFM) are promotes stable association with the 40S ribosome. The residue at position 257 (tyrosine 257) is a Phosphotyrosine.

It belongs to the eIF-3 subunit J family. In terms of assembly, component of the eukaryotic translation initiation factor 3 (eIF-3) complex, which is composed of 13 subunits: EIF3A, EIF3B, EIF3C, EIF3D, EIF3E, EIF3F, EIF3G, EIF3H, EIF3I, EIF3J, EIF3K, EIF3L and EIF3M. The eIF-3 complex appears to include 3 stable modules: module A is composed of EIF3A, EIF3B, EIF3G and EIF3I; module B is composed of EIF3F, EIF3H, and EIF3M; and module C is composed of EIF3C, EIF3D, EIF3E, EIF3K and EIF3L. EIF3C of module C binds EIF3B of module A and EIF3H of module B, thereby linking the three modules. EIF3J is a labile subunit that binds to the eIF-3 complex via EIF3B. The eIF-3 complex interacts with RPS6KB1 under conditions of nutrient depletion. Mitogenic stimulation leads to binding and activation of a complex composed of MTOR and RPTOR, leading to phosphorylation and release of RPS6KB1 and binding of EIF4B to eIF-3. Post-translationally, phosphorylated. Phosphorylation is enhanced upon serum stimulation.

It localises to the cytoplasm. Functionally, component of the eukaryotic translation initiation factor 3 (eIF-3) complex, which is required for several steps in the initiation of protein synthesis. The eIF-3 complex associates with the 40S ribosome and facilitates the recruitment of eIF-1, eIF-1A, eIF-2:GTP:methionyl-tRNAi and eIF-5 to form the 43S pre-initiation complex (43S PIC). The eIF-3 complex stimulates mRNA recruitment to the 43S PIC and scanning of the mRNA for AUG recognition. The eIF-3 complex is also required for disassembly and recycling of post-termination ribosomal complexes and subsequently prevents premature joining of the 40S and 60S ribosomal subunits prior to initiation. The eIF-3 complex specifically targets and initiates translation of a subset of mRNAs involved in cell proliferation, including cell cycling, differentiation and apoptosis, and uses different modes of RNA stem-loop binding to exert either translational activation or repression. This subunit binds directly within the mRNA entry channel of the 40S ribosome to the aminoacyl (A) site. It may regulate the interaction between the 43S PIC and mRNA. This Mus musculus (Mouse) protein is Eukaryotic translation initiation factor 3 subunit J-A (Eif3j1).